A 284-amino-acid chain; its full sequence is 4-hydroxybenzoate octaprenyltransferase (284 aa).

The next 8 membrane-spanning stretches (helical) occupy residues 16 to 36, 40 to 60, 91 to 111, 132 to 152, 157 to 177, 207 to 227, 231 to 251, and 259 to 279; these read PIGILLLLWPTLWALWMASDG, WTLVAIFTLGTVLMRSAGCAV, LLVALVLTLLAFALIWPLNTL, FFAIPQAYLGIAFGFGIPMGF, NTVPAAAWWLLVANVFWSVAY, AIIMFCYAMTLGIIGIVGWQF, IWFVAGLLLAAVCAAYHYTLI, and CFAAFNHNNWLGGAIFGGVAL.

The protein belongs to the UbiA prenyltransferase family. Mg(2+) serves as cofactor.

The protein localises to the cell inner membrane. It carries out the reaction all-trans-octaprenyl diphosphate + 4-hydroxybenzoate = 4-hydroxy-3-(all-trans-octaprenyl)benzoate + diphosphate. The protein operates within cofactor biosynthesis; ubiquinone biosynthesis. Catalyzes the prenylation of para-hydroxybenzoate (PHB) with an all-trans polyprenyl group. Mediates the second step in the final reaction sequence of ubiquinone-8 (UQ-8) biosynthesis, which is the condensation of the polyisoprenoid side chain with PHB, generating the first membrane-bound Q intermediate 3-octaprenyl-4-hydroxybenzoate. In Janthinobacterium sp. (strain Marseille) (Minibacterium massiliensis), this protein is 4-hydroxybenzoate octaprenyltransferase.